Reading from the N-terminus, the 546-residue chain is Phosphomethylpyrimidine synthase (546 aa).

Substrate contacts are provided by residues asparagine 145, methionine 174, tyrosine 203, histidine 239, 259 to 261, 300 to 303, and glutamate 339; these read SRG and DGLR. Histidine 343 serves as a coordination point for Zn(2+). Substrate is bound at residue tyrosine 366. Residue histidine 407 coordinates Zn(2+). Cysteine 487, cysteine 490, and cysteine 495 together coordinate [4Fe-4S] cluster.

The protein belongs to the ThiC family. [4Fe-4S] cluster serves as cofactor.

The enzyme catalyses 5-amino-1-(5-phospho-beta-D-ribosyl)imidazole + S-adenosyl-L-methionine = 4-amino-2-methyl-5-(phosphooxymethyl)pyrimidine + CO + 5'-deoxyadenosine + formate + L-methionine + 3 H(+). It functions in the pathway cofactor biosynthesis; thiamine diphosphate biosynthesis. Functionally, catalyzes the synthesis of the hydroxymethylpyrimidine phosphate (HMP-P) moiety of thiamine from aminoimidazole ribotide (AIR) in a radical S-adenosyl-L-methionine (SAM)-dependent reaction. In Mycobacterium ulcerans (strain Agy99), this protein is Phosphomethylpyrimidine synthase.